A 289-amino-acid polypeptide reads, in one-letter code: Pyridoxal kinase PdxY (289 aa).

Substrate is bound by residues Ser9 and 44-45 (TQ). ATP contacts are provided by Asp112, Val144, Glu149, and Lys182. Asp221 is a binding site for substrate.

This sequence belongs to the pyridoxine kinase family. PdxY subfamily. In terms of assembly, homodimer. The cofactor is Mg(2+).

It carries out the reaction pyridoxal + ATP = pyridoxal 5'-phosphate + ADP + H(+). Its pathway is cofactor metabolism; pyridoxal 5'-phosphate salvage; pyridoxal 5'-phosphate from pyridoxal: step 1/1. Functionally, pyridoxal kinase involved in the salvage pathway of pyridoxal 5'-phosphate (PLP). Catalyzes the phosphorylation of pyridoxal to PLP. This Vibrio parahaemolyticus serotype O3:K6 (strain RIMD 2210633) protein is Pyridoxal kinase PdxY.